We begin with the raw amino-acid sequence, 343 residues long: UDP-3-O-acylglucosamine N-acyltransferase (343 aa).

His-239 (proton acceptor) is an active-site residue.

The protein belongs to the transferase hexapeptide repeat family. LpxD subfamily. As to quaternary structure, homotrimer.

It carries out the reaction a UDP-3-O-[(3R)-3-hydroxyacyl]-alpha-D-glucosamine + a (3R)-hydroxyacyl-[ACP] = a UDP-2-N,3-O-bis[(3R)-3-hydroxyacyl]-alpha-D-glucosamine + holo-[ACP] + H(+). The protein operates within bacterial outer membrane biogenesis; LPS lipid A biosynthesis. Functionally, catalyzes the N-acylation of UDP-3-O-acylglucosamine using 3-hydroxyacyl-ACP as the acyl donor. Is involved in the biosynthesis of lipid A, a phosphorylated glycolipid that anchors the lipopolysaccharide to the outer membrane of the cell. The polypeptide is UDP-3-O-acylglucosamine N-acyltransferase (Vibrio vulnificus (strain YJ016)).